Here is a 123-residue protein sequence, read N- to C-terminus: uncharacterized protein (123 aa).

2 consecutive transmembrane segments (helical) span residues 55–77 and 92–114; these read LLIH…STIL and FFIN…TIVY.

The protein resides in the cell membrane. This is an uncharacterized protein from Pasteurella multocida (strain Pm70).